A 274-amino-acid chain; its full sequence is Large ribosomal subunit protein uL2cz/uL2cy (274 aa).

2 disordered regions span residues 1-21 (MAIH…VDSQ) and 224-274 (NPVD…RRSK).

This sequence belongs to the universal ribosomal protein uL2 family. As to quaternary structure, part of the 50S ribosomal subunit.

The protein resides in the plastid. It localises to the chloroplast. The polypeptide is Large ribosomal subunit protein uL2cz/uL2cy (rpl2-A) (Gossypium hirsutum (Upland cotton)).